The following is a 580-amino-acid chain: Cleavage stimulation factor subunit 2 (580 aa).

Serine 14 bears the Phosphoserine mark. An RRM domain is found at 16 to 94 (RSVFVGNIPY…RALRVDNAAS (79 aa)). Residues 108–248 (APVIESPYGE…VNGAPPMMQA (141 aa)) are interactions with CSTF3 and SYMPK. Residue lysine 189 forms a Glycyl lysine isopeptide (Lys-Gly) (interchain with G-Cter in SUMO2) linkage. The residue at position 308 (arginine 308) is an Omega-N-methylarginine. Disordered stretches follow at residues 311-331 (LPTN…DPRG) and 347-414 (LGPP…RGLD). Basic and acidic residues-rich tracts occupy residues 363–376 (PGHE…HDMR) and 405–414 (RGGRDPRGLD). The 1; approximate repeat unit spans residues 413-417 (LDARG). Positions 413-472 (LDARGMEARAMEARGLDARGLEARAMEARAMEARAMEARAMEARAMEARAMEARGMDTRG) are 12 X 5 AA tandem repeats of M-E-A-R-[AG]. 2 tandem repeats follow at residues 418 to 422 (MEARA) and 423 to 427 (MEARG). The 4; approximate repeat unit spans residues 428–432 (LDARG). Residues 433-437 (LEARA) form a 5; approximate repeat. 6 consecutive repeat copies span residues 438–442 (MEARA), 443–447 (MEARA), 448–452 (MEARA), 453–457 (MEARA), 458–462 (MEARA), and 463–467 (MEARG). Residues 468–472 (MDTRG) form a 12; approximate repeat. An omega-N-methylarginine mark is found at arginine 471 and arginine 478. A disordered region spans residues 512–536 (MQGASMQGGSQPGGFSPGQSQVTPQ). The interaction with RPO2TC1 stretch occupies residues 517–580 (MQGGSQPGGF…EQIQKSTGAP (64 aa)). Phosphoserine is present on residues serine 521 and serine 527.

In terms of assembly, the CSTF complex is composed of CSTF1 (50 kDa subunit), CSTF2 (64 kDa subunit) and CSTF3 (77 kDa subunit). CSTF2 directly interacts with CSTF3, SYMPK and RPO2TC1. Interacts with HSF1 in heat-stressed cells. Interacts with CPSF2, CPSF3 and FIP1L1. Interacts with DDX1. Expressed in most somatic cell types (at protein level). Highly expressed in testis, except in meiotic spermatocytes.

It is found in the nucleus. One of the multiple factors required for polyadenylation and 3'-end cleavage of mammalian pre-mRNAs. This subunit is directly involved in the binding to pre-mRNAs. In Mus musculus (Mouse), this protein is Cleavage stimulation factor subunit 2 (Cstf2).